The following is a 97-amino-acid chain: Aspartyl/glutamyl-tRNA(Asn/Gln) amidotransferase subunit C (97 aa).

Residues 74–97 (AEQALDQAPASQRDRFEVPRILGE) are disordered. A compositionally biased stretch (basic and acidic residues) spans 85–97 (QRDRFEVPRILGE).

The protein belongs to the GatC family. Heterotrimer of A, B and C subunits.

The enzyme catalyses L-glutamyl-tRNA(Gln) + L-glutamine + ATP + H2O = L-glutaminyl-tRNA(Gln) + L-glutamate + ADP + phosphate + H(+). It catalyses the reaction L-aspartyl-tRNA(Asn) + L-glutamine + ATP + H2O = L-asparaginyl-tRNA(Asn) + L-glutamate + ADP + phosphate + 2 H(+). In terms of biological role, allows the formation of correctly charged Asn-tRNA(Asn) or Gln-tRNA(Gln) through the transamidation of misacylated Asp-tRNA(Asn) or Glu-tRNA(Gln) in organisms which lack either or both of asparaginyl-tRNA or glutaminyl-tRNA synthetases. The reaction takes place in the presence of glutamine and ATP through an activated phospho-Asp-tRNA(Asn) or phospho-Glu-tRNA(Gln). In Corynebacterium kroppenstedtii (strain DSM 44385 / JCM 11950 / CIP 105744 / CCUG 35717), this protein is Aspartyl/glutamyl-tRNA(Asn/Gln) amidotransferase subunit C.